Reading from the N-terminus, the 425-residue chain is UBX domain-containing protein 4 (425 aa).

Residues 224–257 (TPIPSLPSTPSSYQNLPSQSLTGESLPTVSNQEK) are disordered. The span at 236-254 (YQNLPSQSLTGESLPTVSN) shows a compositional bias: polar residues. Serine 338 carries the phosphoserine modification. Positions 341-390 (PLPSSAIVKFDFGNGKSIVHEFSKDDNIETLRAFVASHLSPEESTSFQLT) constitute a UBX domain.

Its subcellular location is the cytoplasm. It localises to the nucleus. Involved in CDC48-dependent protein degradation through the ubiquitin/proteasome pathway. The sequence is that of UBX domain-containing protein 4 (ubx4) from Schizosaccharomyces pombe (strain 972 / ATCC 24843) (Fission yeast).